The chain runs to 150 residues: 3-dehydroquinate dehydratase (150 aa).

The active-site Proton acceptor is the Y26. Substrate contacts are provided by N77, H83, and D90. Catalysis depends on H103, which acts as the Proton donor. Residues 104–105 and R114 each bind substrate; that span reads LS.

It belongs to the type-II 3-dehydroquinase family. Homododecamer.

It catalyses the reaction 3-dehydroquinate = 3-dehydroshikimate + H2O. It functions in the pathway metabolic intermediate biosynthesis; chorismate biosynthesis; chorismate from D-erythrose 4-phosphate and phosphoenolpyruvate: step 3/7. Its function is as follows. Catalyzes a trans-dehydration via an enolate intermediate. The sequence is that of 3-dehydroquinate dehydratase from Yersinia enterocolitica serotype O:8 / biotype 1B (strain NCTC 13174 / 8081).